A 347-amino-acid polypeptide reads, in one-letter code: NADH-quinone oxidoreductase subunit H (347 aa).

The next 8 membrane-spanning stretches (helical) occupy residues 21–41 (IAGILLIALPLMLGVAMIIYA), 87–107 (GLFLIAPIITFTVALMAWAVI), 120–140 (VGLLYVLAISSLGVYGVVIAG), 160–180 (ISYEVSIGFILICVVLWAGTF), 194–214 (WIINGFVANPLLFPMWVMFLI), 259–279 (LLMCALNAVLFWGGYLPPLDI), 282–302 (LYLVPGFVWLLLKILFFFFIF), and 324–344 (VFLPVSLLFVFLVSGYLMATG).

This sequence belongs to the complex I subunit 1 family. NDH-1 is composed of 14 different subunits. Subunits NuoA, H, J, K, L, M, N constitute the membrane sector of the complex.

It localises to the cell inner membrane. The catalysed reaction is a quinone + NADH + 5 H(+)(in) = a quinol + NAD(+) + 4 H(+)(out). In terms of biological role, NDH-1 shuttles electrons from NADH, via FMN and iron-sulfur (Fe-S) centers, to quinones in the respiratory chain. The immediate electron acceptor for the enzyme in this species is believed to be ubiquinone. Couples the redox reaction to proton translocation (for every two electrons transferred, four hydrogen ions are translocated across the cytoplasmic membrane), and thus conserves the redox energy in a proton gradient. This subunit may bind ubiquinone. This is NADH-quinone oxidoreductase subunit H from Novosphingobium aromaticivorans (strain ATCC 700278 / DSM 12444 / CCUG 56034 / CIP 105152 / NBRC 16084 / F199).